We begin with the raw amino-acid sequence, 440 residues long: Cyclic dipeptide prenyltransferase (440 aa).

The segment at 1–33 (MDGEMTASPPDISACDTSAVDEQTGQSGQSQAP) is disordered. Residues 20–32 (VDEQTGQSGQSQA) are compositionally biased toward polar residues. Thr108 and Glu116 together coordinate substrate. Residues Arg129, Lys219, and Tyr221 each contribute to the dimethylallyl diphosphate site. Phe223 contacts substrate. The dimethylallyl diphosphate site is built by Lys286, Tyr288, Tyr366, Tyr431, and Tyr435.

The protein belongs to the tryptophan dimethylallyltransferase family.

The enzyme catalyses harmol + dimethylallyl diphosphate = 6-(3-dimethylallyl)harmol + diphosphate. It catalyses the reaction an N-terminal L-tryptophanyl-L-alpha-aminoacyl-[peptide] + H2O = an N-terminal L-alpha-aminoacyl-[peptide] + L-tryptophan. The catalysed reaction is (R)-benzodiazepinedione + dimethylallyl diphosphate = (2S,3R,11R)-aszonalenin + diphosphate. It carries out the reaction (S)-benzodiazepinedione + dimethylallyl diphosphate = (2S,3R,11S)-aszonalenin + diphosphate. In terms of biological role, prenyltransferase that catalyzes reverse prenylation at position N-1 of tryptophan-containing cyclic dipeptides. Accepts only dimethylallyl diphosphate (DMAPP) as the prenyl donor but shows broad substrate specificities toward its aromatic substrates. Also shows tryptophan aminopeptidase activity with preference for linear peptides containing a tryptophanyl moiety at the N-terminus. This Aspergillus fumigatus (Neosartorya fumigata) protein is Cyclic dipeptide prenyltransferase.